The following is a 506-amino-acid chain: H/ACA ribonucleoprotein complex subunit DKC1 (506 aa).

The disordered stretch occupies residues 1–26 (MADTESKKEKKRKSKKISDEEVGDIQ). The active-site Nucleophile is D120. Positions 291–366 (HKRIVMKDSA…VVAKIKRVIM (76 aa)) constitute a PUA domain. Disordered stretches follow at residues 391–410 (GLLD…WKEG) and 419–506 (VKKG…ADSD). A compositionally biased stretch (basic and acidic residues) spans 421-434 (KGGEASAKRKRDES). Over residues 457 to 466 (EKKKKKKEKK) the composition is skewed to basic residues.

The protein belongs to the pseudouridine synthase TruB family. As to quaternary structure, part of the H/ACA small nucleolar ribonucleoprotein (H/ACA snoRNP) complex. The complex binds a box H/ACA small nucleolar RNA (snoRNA), which may target the specific site of modification within the RNA substrate.

The protein localises to the nucleus. Its subcellular location is the nucleolus. It localises to the cajal body. It catalyses the reaction uridine in 5S rRNA = pseudouridine in 5S rRNA. Its function is as follows. Catalytic subunit of H/ACA small nucleolar ribonucleoprotein (H/ACA snoRNP) complex, which catalyzes pseudouridylation of rRNA. This involves the isomerization of uridine such that the ribose is subsequently attached to C5, instead of the normal N1. Pseudouridine ('psi') residues may serve to stabilize the conformation of rRNAs. Required for ribosome biogenesis and telomere maintenance. In Danio rerio (Zebrafish), this protein is H/ACA ribonucleoprotein complex subunit DKC1.